Consider the following 249-residue polypeptide: MAGHSKWANIKRQKARVDAKKGSLFTKLSRAIIVAARNGLPDPDANFRLRSAVEKAKAAGMPAETIERAIAKGSGNWADDSPLEEIRYEGYGPGGVAVLIEAMTDNRNRTAAEVREAFSKVGGSLGESGCVSWLFRQKGVISLEGVTDPEALLLAVAEAGGEDLKVEGTDAEVYCDYTLLEQVATYLKKEGYQVQEAAIRWIPSTEVHVEDPETAKLVLTLMERLDHLDDVQNVYANFEIDEALMESLA.

The protein belongs to the TACO1 family.

The protein localises to the cytoplasm. The polypeptide is Probable transcriptional regulatory protein CYA_2259 (Synechococcus sp. (strain JA-3-3Ab) (Cyanobacteria bacterium Yellowstone A-Prime)).